The following is a 265-amino-acid chain: Catechol O-methyltransferase (265 aa).

Over 1–2 (ML) the chain is Cytoplasmic. Residues 3–19 (LAAVSLGLLLLAFLLLL) form a helical; Signal-anchor for type II membrane protein membrane-spanning segment. At 20–265 (RHLGWGLVAI…QGPGSSPVKS (246 aa)) the chain is on the extracellular side. Residues V85, E107, S115, E133, I134, 160–163 (GASQ), S162, and D184 contribute to the S-adenosyl-L-methionine site. Position 184 (D184) interacts with Mg(2+). K187 lines the substrate pocket. Residues D212 and N213 each contribute to the Mg(2+) site. Substrate-binding residues include N213 and E242. 3 positions are modified to phosphoserine: S260, S261, and S265.

Belongs to the class I-like SAM-binding methyltransferase superfamily. Cation-dependent O-methyltransferase family. Mg(2+) is required as a cofactor.

It localises to the cytoplasm. It is found in the cell membrane. It catalyses the reaction a catechol + S-adenosyl-L-methionine = a guaiacol + S-adenosyl-L-homocysteine + H(+). The catalysed reaction is 2-hydroxyestrone + S-adenosyl-L-methionine = 2-hydroxy-3-methoxy-estrone + S-adenosyl-L-homocysteine + H(+). It carries out the reaction 4-hydroxyestrone + S-adenosyl-L-methionine = 4-methoxyestrone + S-adenosyl-L-homocysteine + H(+). The enzyme catalyses 2-hydroxyestrone + S-adenosyl-L-methionine = 2-methoxyestrone + S-adenosyl-L-homocysteine + H(+). It catalyses the reaction 4-hydroxy-17beta-estradiol + S-adenosyl-L-methionine = 4-methoxy-17beta-estradiol + S-adenosyl-L-homocysteine + H(+). The catalysed reaction is 2-hydroxy-17beta-estradiol + S-adenosyl-L-methionine = 2-hydroxy-3-methoxy-17beta-estradiol + S-adenosyl-L-homocysteine + H(+). It carries out the reaction 2-hydroxy-17beta-estradiol + S-adenosyl-L-methionine = 2-methoxy-17beta-estradiol + S-adenosyl-L-homocysteine + H(+). In terms of biological role, catalyzes the O-methylation, and thereby the inactivation, of catecholamine neurotransmitters and catechol hormones. Also shortens the biological half-lives of certain neuroactive drugs, like L-DOPA, alpha-methyl DOPA and isoproterenol. The polypeptide is Catechol O-methyltransferase (Mus musculus (Mouse)).